A 1295-amino-acid chain; its full sequence is Nonribosomal peptide synthetase resC (1295 aa).

Residues Met-1–Asp-24 form a disordered region. Positions Lys-221–Leu-624 are adenylation. In terms of domain architecture, Carrier spans Glu-759–Val-836. At Ser-796 the chain carries O-(pantetheine 4'-phosphoryl)serine. A condensation region spans residues Glu-873–Leu-1284.

The protein belongs to the NRP synthetase family. Pantetheine 4'-phosphate is required as a cofactor.

The catalysed reaction is restrictinol + glycine + H(+) = restricticin + H2O. It participates in antifungal biosynthesis. Nonribosomal peptide synthetase; part of the gene cluster that mediates the biosynthesis of the tetrahydropyranyl antifungal agent restricticin that acts as an inhibitor of CYP51 and blocks the ergosterol biosynthesis. Within the pathway, resC catalyzes the C3 esterification of restrictinol with glycine to yield restricticin. ResC represents an example of the emerging class of single-module NRPS-like enzymes that perform esterification reactions. The highly reducing polyketide synthase resH, the short chain dehydrogenase resG, the cyclase resF, the FAD-dependent monooxygenase resA and the enoylreductase resD are required to generate the first stable intermediate desmethylrestrictinol. ResH with resD biosynthesize the first polyketide chain intermediate that is reduced by resG, followed by epoxidation by resA before 6-endo cyclization via epoxide opening by resF leads to desmethylrestrictinol. The methyltransferase resE then catalyzes the C4 O-methylation of desmethylrestrictinol to produce restrictinol, and the nonribosomal peptide synthetase resC catalyzes the C3 esterification of restrictinol with glycine that leads to restricticin. In Aspergillus sclerotiorum, this protein is Nonribosomal peptide synthetase resC.